A 184-amino-acid chain; its full sequence is MESFSSKSLALQAEKKLLSKMAGRSVAHLFIDETSSEVLDELYRVSKEYTHSRSKAQRVIKDLIKVAVKVAVLHRSGCFSPGELALATRFRQKLRQGAMTALSFGEVDFTFEAAVLAGLLIECREILLELVEHHLTPKSHDRIRHVFDHYSDPDLLTALYGPDFTQHLDKICDGLRKLLDEGKL.

Residue Ser-3 is modified to Phosphoserine.

The protein belongs to the TNFAIP8 family. TNFAIP8L2 subfamily. In terms of assembly, may interact with CASP8; however, such result is unclear since could not reproduce the interaction with CASP8. Interacts with RAC1. Phosphorylated by TAK1/MAP3K7; this phosphorylation triggers association with BTRC and subsequent ubiquitination and degradation. In terms of processing, ubiquitinated in a BTRC-depdent manner; leading to degradation mediated through the proteasome pathway.

The protein localises to the cytoplasm. It is found in the nucleus. It localises to the lysosome. Acts as a negative regulator of innate and adaptive immunity by maintaining immune homeostasis. Plays a regulatory role in the Toll-like signaling pathway by determining the strength of LPS-induced signaling and gene expression. Inhibits TCR-mediated T-cell activation and negatively regulate T-cell function to prevent hyperresponsiveness. Also inhibits autolysosome formation via negatively modulating MTOR activation by interacting with RAC1 and promoting the disassociation of the RAC1-MTOR complex. Plays an essential role in NK-cell biology by acting as a checkpoint and displaying an expression pattern correlating with NK-cell maturation process and by negatively regulating NK-cell maturation and antitumor immunity. Mechanistically, suppresses IL-15-triggered mTOR activity in NK-cells. This chain is Tumor necrosis factor alpha-induced protein 8-like protein 2 (Tnfaip8l2), found in Rattus norvegicus (Rat).